The primary structure comprises 329 residues: Acetyl-coenzyme A carboxylase carboxyl transferase subunit alpha (329 aa).

The region spanning 40–294 (QLETLAARRR…REALERNLSE (255 aa)) is the CoA carboxyltransferase C-terminal domain.

It belongs to the AccA family. In terms of assembly, acetyl-CoA carboxylase is a heterohexamer composed of biotin carboxyl carrier protein (AccB), biotin carboxylase (AccC) and two subunits each of ACCase subunit alpha (AccA) and ACCase subunit beta (AccD).

The protein localises to the cytoplasm. It catalyses the reaction N(6)-carboxybiotinyl-L-lysyl-[protein] + acetyl-CoA = N(6)-biotinyl-L-lysyl-[protein] + malonyl-CoA. It participates in lipid metabolism; malonyl-CoA biosynthesis; malonyl-CoA from acetyl-CoA: step 1/1. Functionally, component of the acetyl coenzyme A carboxylase (ACC) complex. First, biotin carboxylase catalyzes the carboxylation of biotin on its carrier protein (BCCP) and then the CO(2) group is transferred by the carboxyltransferase to acetyl-CoA to form malonyl-CoA. In Synechococcus sp. (strain CC9311), this protein is Acetyl-coenzyme A carboxylase carboxyl transferase subunit alpha.